The sequence spans 64 residues: MPKMKTDKGVAKRFKKTANGFKRKQAHLRHILTKKSTKRKRHLRAKCLVSKADVPAIARQLPYA.

Belongs to the bacterial ribosomal protein bL35 family.

This is Large ribosomal subunit protein bL35 from Shewanella baltica (strain OS223).